A 222-amino-acid polypeptide reads, in one-letter code: S-crystallin SL20-1 (222 aa).

Residues 2–80 (PNYTLYYFNG…YLARENGYYG (79 aa)) enclose the GST N-terminal domain. The 141-residue stretch at 82–222 (NNMDMFRIDY…YLKKRNNTNW (141 aa)) folds into the GST C-terminal domain.

The protein belongs to the GST superfamily. As to expression, lens.

S-crystallins are structural components of squids and octopi eye lens. Contains relatively little if any GST activity. The polypeptide is S-crystallin SL20-1 (Nototodarus sloanii (Wellington flying squid)).